Consider the following 140-residue polypeptide: 3-hydroxyacyl-[acyl-carrier-protein] dehydratase FabZ (140 aa).

His48 is an active-site residue.

Belongs to the thioester dehydratase family. FabZ subfamily.

Its subcellular location is the cytoplasm. It catalyses the reaction a (3R)-hydroxyacyl-[ACP] = a (2E)-enoyl-[ACP] + H2O. Its function is as follows. Involved in unsaturated fatty acids biosynthesis. Catalyzes the dehydration of short chain beta-hydroxyacyl-ACPs and long chain saturated and unsaturated beta-hydroxyacyl-ACPs. The polypeptide is 3-hydroxyacyl-[acyl-carrier-protein] dehydratase FabZ (Oceanobacillus iheyensis (strain DSM 14371 / CIP 107618 / JCM 11309 / KCTC 3954 / HTE831)).